The chain runs to 371 residues: Leucine-rich repeat-containing protein 58 (371 aa).

Ser-24 is subject to Phosphoserine. LRR repeat units follow at residues 45-66, 69-91, 92-113, 121-143, 144-166, 167-189, 190-211, 213-234, and 236-256; these read ALLR…LGSG, HLQL…LALR, GLRT…PKGL, SLQV…LELR, ALQT…ENLQ, SLEC…GNLP, SLNY…LSQL, SLRS…ILNL, and HLEE…RDLT. Residues 340 to 351 are compositionally biased toward low complexity; it reads SSASHSSTSQSE. The interval 340–361 is disordered; that stretch reads SSASHSSTSQSESDSEDEASVA.

This Homo sapiens (Human) protein is Leucine-rich repeat-containing protein 58 (LRRC58).